The chain runs to 461 residues: Bifunctional protein GlmU (461 aa).

Residues 1 to 229 (MEKYVVVLAA…FSESLGVNDR (229 aa)) form a pyrophosphorylase region. UDP-N-acetyl-alpha-D-glucosamine contacts are provided by residues 8–11 (LAAG), K22, Q72, and 77–78 (GT). D102 contributes to the Mg(2+) binding site. UDP-N-acetyl-alpha-D-glucosamine-binding residues include G139, E154, N169, and N227. N227 contributes to the Mg(2+) binding site. Residues 230 to 250 (VALAQATKTMQRRINEAHMRD) are linker. Positions 251–461 (GVSFIDPDTA…LPLSKDKDWE (211 aa)) are N-acetyltransferase. R332 and K350 together coordinate UDP-N-acetyl-alpha-D-glucosamine. H362 functions as the Proton acceptor in the catalytic mechanism. Positions 365 and 376 each coordinate UDP-N-acetyl-alpha-D-glucosamine. Acetyl-CoA is bound by residues 385–386 (NY), A422, and R439.

In the N-terminal section; belongs to the N-acetylglucosamine-1-phosphate uridyltransferase family. It in the C-terminal section; belongs to the transferase hexapeptide repeat family. Homotrimer. Mg(2+) is required as a cofactor.

The protein resides in the cytoplasm. The catalysed reaction is alpha-D-glucosamine 1-phosphate + acetyl-CoA = N-acetyl-alpha-D-glucosamine 1-phosphate + CoA + H(+). It catalyses the reaction N-acetyl-alpha-D-glucosamine 1-phosphate + UTP + H(+) = UDP-N-acetyl-alpha-D-glucosamine + diphosphate. It participates in nucleotide-sugar biosynthesis; UDP-N-acetyl-alpha-D-glucosamine biosynthesis; N-acetyl-alpha-D-glucosamine 1-phosphate from alpha-D-glucosamine 6-phosphate (route II): step 2/2. It functions in the pathway nucleotide-sugar biosynthesis; UDP-N-acetyl-alpha-D-glucosamine biosynthesis; UDP-N-acetyl-alpha-D-glucosamine from N-acetyl-alpha-D-glucosamine 1-phosphate: step 1/1. Its pathway is bacterial outer membrane biogenesis; LPS lipid A biosynthesis. In terms of biological role, catalyzes the last two sequential reactions in the de novo biosynthetic pathway for UDP-N-acetylglucosamine (UDP-GlcNAc). The C-terminal domain catalyzes the transfer of acetyl group from acetyl coenzyme A to glucosamine-1-phosphate (GlcN-1-P) to produce N-acetylglucosamine-1-phosphate (GlcNAc-1-P), which is converted into UDP-GlcNAc by the transfer of uridine 5-monophosphate (from uridine 5-triphosphate), a reaction catalyzed by the N-terminal domain. The polypeptide is Bifunctional protein GlmU (Lactobacillus helveticus (strain DPC 4571)).